An 894-amino-acid chain; its full sequence is Histone-lysine N-methyltransferase EZ2 (894 aa).

Positions 1–11 (MASSSKASDSS) are enriched in low complexity. Disordered regions lie at residues 1-25 (MASS…GKDA), 395-447 (SSVS…KRQK), and 491-513 (KKTS…VGRQ). Positions 395–421 (SSVSAEESTTTPSADISETENVSSDLP) are enriched in polar residues. Residues 425–435 (LRKHKISKHGP) show a composition bias toward basic residues. The segment covering 503–513 (PATTMENVGRQ) has biased composition (polar residues). The region spanning 527 to 577 (TLSCWSALERDLYLKGIEIFGKNSCLIARNLLSGLKTCIEVANYMYNNGAA) is the SANT domain. The CXC domain maps to 627 to 731 (AGHPTVRKRT…SLGEPLARGD (105 aa)). In terms of domain architecture, SET spans 746–861 (QRILLGRSDV…ASEELFYDYR (116 aa)). The interval 867–894 (APAWARRPEGSKKDEASVSHRRAHKVAR) is disordered. Residues 872 to 884 (RRPEGSKKDEASV) are compositionally biased toward basic and acidic residues. Residues 885–894 (SHRRAHKVAR) are compositionally biased toward basic residues.

Belongs to the class V-like SAM-binding methyltransferase superfamily. Histone-lysine methyltransferase family. EZ subfamily.

The protein resides in the nucleus. The catalysed reaction is L-lysyl(27)-[histone H3] + 3 S-adenosyl-L-methionine = N(6),N(6),N(6)-trimethyl-L-lysyl(27)-[histone H3] + 3 S-adenosyl-L-homocysteine + 3 H(+). Its function is as follows. Polycomb group (PcG) protein. Catalytic subunit of some PcG multiprotein complex, which methylates 'Lys-27' of histone H3, leading to transcriptional repression of the affected target genes. PcG proteins are not required to initiate repression, but to maintain it during later stages of development. This Zea mays (Maize) protein is Histone-lysine N-methyltransferase EZ2 (EZ2).